An 837-amino-acid polypeptide reads, in one-letter code: Translation initiation factor IF-2 (837 aa).

Positions 94–252 are disordered; it reads QRSPEEIEAE…NAHGFQSPTG (159 aa). Residues 96–136 show a composition bias toward basic and acidic residues; the sequence is SPEEIEAERKRELDERRAVENAARQKAEEEARVRAEEEARR. Residues 137 to 171 are compositionally biased toward low complexity; that stretch reads QPAAPSAPAEAVAAPAPVAEPVREAAPVVAAAPAA. Basic and acidic residues-rich tracts occupy residues 172–213 and 221–230; these read DTRK…EKAP and TTDEESDGFR. Residues 231-244 show a composition bias toward basic residues; it reads RGGRGKAKLKKRNA. The tr-type G domain maps to 337-506; the sequence is PRAPVVTVMG…LLQAEVLELT (170 aa). The segment at 346–353 is G1; that stretch reads GHVDHGKT. 346–353 lines the GTP pocket; sequence GHVDHGKT. A G2 region spans residues 371-375; that stretch reads GITQH. Residues 392-395 are G3; the sequence is DTPG. GTP contacts are provided by residues 392 to 396 and 446 to 449; these read DTPGH and NKID. Residues 446 to 449 are G4; it reads NKID. The interval 482–484 is G5; the sequence is SAK.

It belongs to the TRAFAC class translation factor GTPase superfamily. Classic translation factor GTPase family. IF-2 subfamily.

It is found in the cytoplasm. In terms of biological role, one of the essential components for the initiation of protein synthesis. Protects formylmethionyl-tRNA from spontaneous hydrolysis and promotes its binding to the 30S ribosomal subunits. Also involved in the hydrolysis of GTP during the formation of the 70S ribosomal complex. This chain is Translation initiation factor IF-2, found in Pseudomonas fluorescens (strain Pf0-1).